We begin with the raw amino-acid sequence, 487 residues long: 3-octaprenyl-4-hydroxybenzoate carboxy-lyase (487 aa).

Asparagine 172 serves as a coordination point for Mn(2+). Prenylated FMN-binding positions include 175–177 (IYR), 189–191 (RWL), and 194–195 (RG). Mn(2+) is bound at residue glutamate 238. The Proton donor role is filled by aspartate 287.

This sequence belongs to the UbiD family. In terms of assembly, homohexamer. Prenylated FMN serves as cofactor. It depends on Mn(2+) as a cofactor.

The protein localises to the cell membrane. It catalyses the reaction a 4-hydroxy-3-(all-trans-polyprenyl)benzoate + H(+) = a 2-(all-trans-polyprenyl)phenol + CO2. It functions in the pathway cofactor biosynthesis; ubiquinone biosynthesis. In terms of biological role, catalyzes the decarboxylation of 3-octaprenyl-4-hydroxy benzoate to 2-octaprenylphenol, an intermediate step in ubiquinone biosynthesis. This Actinobacillus pleuropneumoniae serotype 5b (strain L20) protein is 3-octaprenyl-4-hydroxybenzoate carboxy-lyase.